The sequence spans 90 residues: UPF0297 protein Swol_0469 (90 aa).

Belongs to the UPF0297 family.

The polypeptide is UPF0297 protein Swol_0469 (Syntrophomonas wolfei subsp. wolfei (strain DSM 2245B / Goettingen)).